Reading from the N-terminus, the 311-residue chain is MALPILLDCDPGHDDAIAIVLALASPELDVKAITSSAGNQTPEKTLRNVLRMLTLLNRTDIPVAGGAVKPLMRELIIADNVHGESGLDGPALPEPAFAPQNCTAVELMAKTLRESAEPVTIVSTGPQTNVALLLNSHPELHSKIARIVIMGGAMGLGNWTPAAEFNIYVDPEAAEIVFQSGIPVVMAGLDVTHKAQIHVEDTERFRAIGNPVSTIVAELLDFFLEYHKDEKWGFVGAPLHDPCTIAWLLKPELFTSVERWVGVETQGKYTQGMTVVDYYYLTGNKPNATVMVDVDRQGFVDLLADRLKFYA.

Residue His-240 is part of the active site.

It belongs to the IUNH family. RihA subfamily.

In terms of biological role, hydrolyzes with equal efficiency cytidine or uridine to ribose and cytosine or uracil, respectively. This Escherichia coli (strain ATCC 8739 / DSM 1576 / NBRC 3972 / NCIMB 8545 / WDCM 00012 / Crooks) protein is Pyrimidine-specific ribonucleoside hydrolase RihA.